The primary structure comprises 335 residues: Holliday junction branch migration complex subunit RuvB (335 aa).

Residues 1-181 (MTRILDNDLI…FGITGHMEYY (181 aa)) are large ATPase domain (RuvB-L). ATP is bound by residues L20, R21, G62, K65, T66, T67, 128–130 (EDF), R171, Y181, and R218. T66 is a binding site for Mg(2+). The tract at residues 182-252 (QTADLTEIVE…ITDKALTMLD (71 aa)) is small ATPAse domain (RuvB-S). The tract at residues 255–335 (QEGLDYVDQK…GYPYEKTIKT (81 aa)) is head domain (RuvB-H). R291, R310, R312, and R315 together coordinate DNA.

Belongs to the RuvB family. In terms of assembly, homohexamer. Forms an RuvA(8)-RuvB(12)-Holliday junction (HJ) complex. HJ DNA is sandwiched between 2 RuvA tetramers; dsDNA enters through RuvA and exits via RuvB. An RuvB hexamer assembles on each DNA strand where it exits the tetramer. Each RuvB hexamer is contacted by two RuvA subunits (via domain III) on 2 adjacent RuvB subunits; this complex drives branch migration. In the full resolvosome a probable DNA-RuvA(4)-RuvB(12)-RuvC(2) complex forms which resolves the HJ.

It is found in the cytoplasm. The enzyme catalyses ATP + H2O = ADP + phosphate + H(+). The RuvA-RuvB-RuvC complex processes Holliday junction (HJ) DNA during genetic recombination and DNA repair, while the RuvA-RuvB complex plays an important role in the rescue of blocked DNA replication forks via replication fork reversal (RFR). RuvA specifically binds to HJ cruciform DNA, conferring on it an open structure. The RuvB hexamer acts as an ATP-dependent pump, pulling dsDNA into and through the RuvAB complex. RuvB forms 2 homohexamers on either side of HJ DNA bound by 1 or 2 RuvA tetramers; 4 subunits per hexamer contact DNA at a time. Coordinated motions by a converter formed by DNA-disengaged RuvB subunits stimulates ATP hydrolysis and nucleotide exchange. Immobilization of the converter enables RuvB to convert the ATP-contained energy into a lever motion, pulling 2 nucleotides of DNA out of the RuvA tetramer per ATP hydrolyzed, thus driving DNA branch migration. The RuvB motors rotate together with the DNA substrate, which together with the progressing nucleotide cycle form the mechanistic basis for DNA recombination by continuous HJ branch migration. Branch migration allows RuvC to scan DNA until it finds its consensus sequence, where it cleaves and resolves cruciform DNA. The sequence is that of Holliday junction branch migration complex subunit RuvB from Streptococcus equi subsp. equi (strain 4047).